The primary structure comprises 312 residues: Urease accessory protein UreD (312 aa).

The disordered stretch occupies residues 1–50; that stretch reads MRPLAPDARCAPSRPGRGPWYARRPVTTPSDPPAALREPPPPARRAGKAG.

This sequence belongs to the UreD family. UreD, UreF and UreG form a complex that acts as a GTP-hydrolysis-dependent molecular chaperone, activating the urease apoprotein by helping to assemble the nickel containing metallocenter of UreC. The UreE protein probably delivers the nickel.

It is found in the cytoplasm. Functionally, required for maturation of urease via the functional incorporation of the urease nickel metallocenter. This Sorangium cellulosum (strain So ce56) (Polyangium cellulosum (strain So ce56)) protein is Urease accessory protein UreD.